A 229-amino-acid chain; its full sequence is Flagellar L-ring protein (229 aa).

The first 25 residues, 1-25, serve as a signal peptide directing secretion; sequence MKQVRLLPSAPVRAVCALAVAALAG. A lipid anchor (N-palmitoyl cysteine) is attached at C26. C26 is lipidated: S-diacylglycerol cysteine.

The protein belongs to the FlgH family. The basal body constitutes a major portion of the flagellar organelle and consists of four rings (L,P,S, and M) mounted on a central rod.

It is found in the cell outer membrane. The protein localises to the bacterial flagellum basal body. In terms of biological role, assembles around the rod to form the L-ring and probably protects the motor/basal body from shearing forces during rotation. The chain is Flagellar L-ring protein from Burkholderia ambifaria (strain MC40-6).